Here is a 555-residue protein sequence, read N- to C-terminus: Pyrophosphate--fructose 6-phosphate 1-phosphotransferase (555 aa).

Gly82 lines the diphosphate pocket. Position 146 (Arg146) interacts with substrate. A Mg(2+)-binding site is contributed by Asp176. Substrate is bound by residues 204–206 (TID), 243–244 (KY), 251–253 (MGR), Glu312, and 428–431 (YEGR). Asp206 serves as the catalytic Proton acceptor.

The protein belongs to the phosphofructokinase type A (PFKA) family. PPi-dependent PFK group II subfamily. Clade 'Long' sub-subfamily. As to quaternary structure, homodimer. Requires Mg(2+) as cofactor.

It localises to the cytoplasm. It carries out the reaction beta-D-fructose 6-phosphate + diphosphate = beta-D-fructose 1,6-bisphosphate + phosphate + H(+). Its pathway is carbohydrate degradation; glycolysis; D-glyceraldehyde 3-phosphate and glycerone phosphate from D-glucose: step 3/4. Its activity is regulated as follows. Non-allosteric. Its function is as follows. Catalyzes the phosphorylation of D-fructose 6-phosphate, the first committing step of glycolysis. Uses inorganic phosphate (PPi) as phosphoryl donor instead of ATP like common ATP-dependent phosphofructokinases (ATP-PFKs), which renders the reaction reversible, and can thus function both in glycolysis and gluconeogenesis. Consistently, PPi-PFK can replace the enzymes of both the forward (ATP-PFK) and reverse (fructose-bisphosphatase (FBPase)) reactions. The polypeptide is Pyrophosphate--fructose 6-phosphate 1-phosphotransferase (Borreliella burgdorferi (strain ATCC 35210 / DSM 4680 / CIP 102532 / B31) (Borrelia burgdorferi)).